The sequence spans 275 residues: ADP-dependent (S)-NAD(P)H-hydrate dehydratase (275 aa).

Positions 5-273 (TDEILAKVIK…EEIPLFMKKY (269 aa)) constitute a YjeF C-terminal domain. Positions 40, 103, and 151 each coordinate (6S)-NADPHX. Glycine 214 lines the AMP pocket. Aspartate 215 contributes to the (6S)-NADPHX binding site.

Belongs to the NnrD/CARKD family. As to quaternary structure, homotetramer. Mg(2+) is required as a cofactor.

It carries out the reaction (6S)-NADHX + ADP = AMP + phosphate + NADH + H(+). The catalysed reaction is (6S)-NADPHX + ADP = AMP + phosphate + NADPH + H(+). Its function is as follows. Catalyzes the dehydration of the S-form of NAD(P)HX at the expense of ADP, which is converted to AMP. Together with NAD(P)HX epimerase, which catalyzes the epimerization of the S- and R-forms, the enzyme allows the repair of both epimers of NAD(P)HX, a damaged form of NAD(P)H that is a result of enzymatic or heat-dependent hydration. This is ADP-dependent (S)-NAD(P)H-hydrate dehydratase from Lactococcus lactis subsp. lactis (strain IL1403) (Streptococcus lactis).